A 508-amino-acid chain; its full sequence is Photosystem II CP47 reaction center protein (508 aa).

6 helical membrane passes run 21–36 (SVHIMHTALVSGWAGS), 101–115 (IMFSGLCFLAAIWHW), 140–156 (GIHLFLSGLACFGFGAF), 203–218 (IAAGTLGILAGLFHLS), 237–252 (VLSSSIAAVFFAAFVV), and 457–472 (SFALLFFFGHIWHGAR).

This sequence belongs to the PsbB/PsbC family. PsbB subfamily. In terms of assembly, PSII is composed of 1 copy each of membrane proteins PsbA, PsbB, PsbC, PsbD, PsbE, PsbF, PsbH, PsbI, PsbJ, PsbK, PsbL, PsbM, PsbT, PsbX, PsbY, PsbZ, Psb30/Ycf12, at least 3 peripheral proteins of the oxygen-evolving complex and a large number of cofactors. It forms dimeric complexes. The cofactor is Binds multiple chlorophylls. PSII binds additional chlorophylls, carotenoids and specific lipids..

The protein localises to the plastid. Its subcellular location is the chloroplast thylakoid membrane. In terms of biological role, one of the components of the core complex of photosystem II (PSII). It binds chlorophyll and helps catalyze the primary light-induced photochemical processes of PSII. PSII is a light-driven water:plastoquinone oxidoreductase, using light energy to abstract electrons from H(2)O, generating O(2) and a proton gradient subsequently used for ATP formation. The sequence is that of Photosystem II CP47 reaction center protein from Ceratophyllum demersum (Rigid hornwort).